A 373-amino-acid polypeptide reads, in one-letter code: 4-hydroxy-3-methylbut-2-en-1-yl diphosphate synthase (flavodoxin) (373 aa).

[4Fe-4S] cluster is bound by residues Cys270, Cys273, Cys305, and Glu312.

It belongs to the IspG family. [4Fe-4S] cluster serves as cofactor.

The catalysed reaction is (2E)-4-hydroxy-3-methylbut-2-enyl diphosphate + oxidized [flavodoxin] + H2O + 2 H(+) = 2-C-methyl-D-erythritol 2,4-cyclic diphosphate + reduced [flavodoxin]. It functions in the pathway isoprenoid biosynthesis; isopentenyl diphosphate biosynthesis via DXP pathway; isopentenyl diphosphate from 1-deoxy-D-xylulose 5-phosphate: step 5/6. Converts 2C-methyl-D-erythritol 2,4-cyclodiphosphate (ME-2,4cPP) into 1-hydroxy-2-methyl-2-(E)-butenyl 4-diphosphate. This chain is 4-hydroxy-3-methylbut-2-en-1-yl diphosphate synthase (flavodoxin), found in Serratia proteamaculans (strain 568).